Here is a 209-residue protein sequence, read N- to C-terminus: N-(5'-phosphoribosyl)anthranilate isomerase (209 aa).

This sequence belongs to the TrpF family.

It catalyses the reaction N-(5-phospho-beta-D-ribosyl)anthranilate = 1-(2-carboxyphenylamino)-1-deoxy-D-ribulose 5-phosphate. It participates in amino-acid biosynthesis; L-tryptophan biosynthesis; L-tryptophan from chorismate: step 3/5. The polypeptide is N-(5'-phosphoribosyl)anthranilate isomerase (Erythrobacter litoralis (strain HTCC2594)).